We begin with the raw amino-acid sequence, 164 residues long: uncharacterized protein (164 aa).

Residues 1 to 60 (MERSASVGVNDGRFGGNQFYSPSFSSSSSSSSMRHVNYSCGSCGYELNLSSTNRITSTIG) constitute a chloroplast transit peptide.

It is found in the plastid. The protein resides in the chloroplast. This is an uncharacterized protein from Arabidopsis thaliana (Mouse-ear cress).